A 179-amino-acid polypeptide reads, in one-letter code: Large ribosomal subunit protein uL5 (179 aa).

The protein belongs to the universal ribosomal protein uL5 family. Part of the 50S ribosomal subunit; part of the 5S rRNA/L5/L18/L25 subcomplex. Contacts the 5S rRNA and the P site tRNA. Forms a bridge to the 30S subunit in the 70S ribosome.

Its function is as follows. This is one of the proteins that bind and probably mediate the attachment of the 5S RNA into the large ribosomal subunit, where it forms part of the central protuberance. In the 70S ribosome it contacts protein S13 of the 30S subunit (bridge B1b), connecting the 2 subunits; this bridge is implicated in subunit movement. Contacts the P site tRNA; the 5S rRNA and some of its associated proteins might help stabilize positioning of ribosome-bound tRNAs. This chain is Large ribosomal subunit protein uL5, found in Desulfovibrio desulfuricans (strain ATCC 27774 / DSM 6949 / MB).